The following is a 1392-amino-acid chain: ATP-dependent helicase/nuclease subunit A (1392 aa).

One can recognise a UvrD-like helicase ATP-binding domain in the interval 3–489 (NPKWTPAQQA…IDLNQNFRSR (487 aa)). An ATP-binding site is contributed by 24–31 (AAAGSGKT). Disordered regions lie at residues 291-319 (RGSK…KARD), 556-594 (RGAE…LEEA), and 1051-1126 (GPVQ…LDTK). Composition is skewed to basic and acidic residues over residues 305-319 (ENSK…KARD) and 569-583 (AKGE…REPE). Positions 556–886 (RGAEDAATGA…RFITVHSSKG (331 aa)) constitute a UvrD-like helicase C-terminal domain. Acidic residues predominate over residues 584-594 (SGDDESSLEEA). A compositionally biased stretch (basic and acidic residues) spans 1088–1113 (ASGKTEIPGETKNSEETKTSEDKKNL).

It belongs to the helicase family. AddA subfamily. In terms of assembly, heterodimer of AddA and AddB/RexB. Mg(2+) serves as cofactor.

The enzyme catalyses Couples ATP hydrolysis with the unwinding of duplex DNA by translocating in the 3'-5' direction.. It catalyses the reaction ATP + H2O = ADP + phosphate + H(+). In terms of biological role, the heterodimer acts as both an ATP-dependent DNA helicase and an ATP-dependent, dual-direction single-stranded exonuclease. Recognizes the chi site generating a DNA molecule suitable for the initiation of homologous recombination. The AddA nuclease domain is required for chi fragment generation; this subunit has the helicase and 3' -&gt; 5' nuclease activities. This chain is ATP-dependent helicase/nuclease subunit A, found in Desulfitobacterium hafniense (strain Y51).